The following is an 81-amino-acid chain: ATP synthase subunit c, chloroplastic (81 aa).

2 helical membrane-spanning segments follow: residues 3–23 (PIIS…ASIG) and 57–77 (LAFM…LLFA).

This sequence belongs to the ATPase C chain family. As to quaternary structure, F-type ATPases have 2 components, F(1) - the catalytic core - and F(0) - the membrane proton channel. F(1) has five subunits: alpha(3), beta(3), gamma(1), delta(1), epsilon(1). F(0) has four main subunits: a(1), b(1), b'(1) and c(10-14). The alpha and beta chains form an alternating ring which encloses part of the gamma chain. F(1) is attached to F(0) by a central stalk formed by the gamma and epsilon chains, while a peripheral stalk is formed by the delta, b and b' chains.

The protein localises to the plastid. Its subcellular location is the chloroplast thylakoid membrane. In terms of biological role, f(1)F(0) ATP synthase produces ATP from ADP in the presence of a proton or sodium gradient. F-type ATPases consist of two structural domains, F(1) containing the extramembraneous catalytic core and F(0) containing the membrane proton channel, linked together by a central stalk and a peripheral stalk. During catalysis, ATP synthesis in the catalytic domain of F(1) is coupled via a rotary mechanism of the central stalk subunits to proton translocation. Key component of the F(0) channel; it plays a direct role in translocation across the membrane. A homomeric c-ring of between 10-14 subunits forms the central stalk rotor element with the F(1) delta and epsilon subunits. The protein is ATP synthase subunit c, chloroplastic of Welwitschia mirabilis (Tree tumbo).